Consider the following 209-residue polypeptide: Tektin bundle-interacting protein 1 (209 aa).

Microtubule inner protein component of sperm flagellar doublet microtubules.

It localises to the cytoplasm. It is found in the cytoskeleton. The protein resides in the cilium axoneme. The protein localises to the flagellum axoneme. Its function is as follows. Microtubule inner protein (MIP) part of the dynein-decorated doublet microtubules (DMTs) in cilia axoneme, which is required for motile cilia beating. Located at the center of the tektin bundle where may function to recruit tektins or stabilize the bundle. The polypeptide is Tektin bundle-interacting protein 1 (Homo sapiens (Human)).